A 212-amino-acid chain; its full sequence is Pyrrolidone-carboxylate peptidase (212 aa).

Active-site residues include E78, C141, and H165.

This sequence belongs to the peptidase C15 family. As to quaternary structure, homotetramer.

Its subcellular location is the cytoplasm. The enzyme catalyses Release of an N-terminal pyroglutamyl group from a polypeptide, the second amino acid generally not being Pro.. Removes 5-oxoproline from various penultimate amino acid residues except L-proline. This is Pyrrolidone-carboxylate peptidase from Staphylococcus aureus (strain Mu3 / ATCC 700698).